Consider the following 35-residue polypeptide: DDCLGMFSSCDPKNDKCCPNRVCRSRDQWCKYKLW.

Intrachain disulfides connect C3-C18, C10-C23, and C17-C30.

This sequence belongs to the neurotoxin 10 (Hwtx-1) family. 58 subfamily. In terms of assembly, monomer. Expressed by the venom gland.

It is found in the secreted. Its function is as follows. Low-affinity blocker of Kv4.2/KCND2 voltage-gated potassium channels. Is presumed to shift the voltage-dependence of channel activation to more depolarized potentials and to bind to the S3-S4 linker region of the voltage sensor domain. This is Kappa-theraphotoxin-Tb1b from Theraphosa blondi (Goliath birdeating spider).